The primary structure comprises 967 residues: MPSPPGLRALWLCAALCASRRAGGAPQPGPGPTACPAPCHCQEDGIMLSADCSELGLSAVPGDLDPLTAYLDLSMNNLTELQPGLFHHLRFLEELRLSGNHLSHIPGQAFSGLYSLKILMLQNNQLGGIPAEALWELPSLQSLRLDANLISLVPERSFEGLSSLRHLWLDDNALTEIPVRALNNLPALQAMTLALNRISHIPDYAFQNLTSLVVLHLHNNRIQHLGTHSFEGLHNLETLDLNYNKLQEFPVAIRTLGRLQELGFHNNNIKAIPEKAFMGNPLLQTIHFYDNPIQFVGRSAFQYLPKLHTLSLNGAMDIQEFPDLKGTTSLEILTLTRAGIRLLPSGMCQQLPRLRVLELSHNQIEELPSLHRCQKLEEIGLQHNRIWEIGADTFSQLSSLQALDLSWNAIRSIHPEAFSTLHSLVKLDLTDNQLTTLPLAGLGGLMHLKLKGNLALSQAFSKDSFPKLRILEVPYAYQCCPYGMCASFFKASGQWEAEDLHLDDEESSKRPLGLLARQAENHYDQDLDELQLEMEDSKPHPSVQCSPTPGPFKPCEYLFESWGIRLAVWAIVLLSVLCNGLVLLTVFAGGPVPLPPVKFVVGAIAGANTLTGISCGLLASVDALTFGQFSEYGARWETGLGCRATGFLAVLGSEASVLLLTLAAVQCSVSVSCVRAYGKSPSLGSVRAGVLGCLALAGLAAALPLASVGEYGASPLCLPYAPPEGQPAALGFTVALVMMNSFCFLVVAGAYIKLYCDLPRGDFEAVWDCAMVRHVAWLIFADGLLYCPVAFLSFASMLGLFPVTPEAVKSVLLVVLPLPACLNPLLYLLFNPHFRDDLRRLRPRAGDSGPLAYAAAGELEKSSCDSTQALVAFSDVDLILEASEAGRPPGLETYGFPSVTLISCQQPGAPRLEGSHCVEPEGNHFGNPQPSMDGELLLRAEGSTPAGGGLSGGGGFQPSGLAFASHV.

The first 24 residues, 1 to 24 (MPSPPGLRALWLCAALCASRRAGG), serve as a signal peptide directing secretion. Topologically, residues 25 to 567 (APQPGPGPTA…LFESWGIRLA (543 aa)) are extracellular. The 41-residue stretch at 26–66 (PQPGPGPTACPAPCHCQEDGIMLSADCSELGLSAVPGDLDP) folds into the LRRNT domain. Residue asparagine 77 is glycosylated (N-linked (GlcNAc...) asparagine). LRR repeat units lie at residues 91–112 (FLEELRLSGNHLSHIPGQAFSG), 115–136 (SLKILMLQNNQLGGIPAEALWE), 139–160 (SLQSLRLDANLISLVPERSFEG), 163–186 (SLRHLWLDDNALTEIPVRALNNLP), 187–208 (ALQAMTLALNRISHIPDYAFQN), 211–232 (SLVVLHLHNNRIQHLGTHSFEG), 235–256 (NLETLDLNYNKLQEFPVAIRTL), 258–279 (RLQELGFHNNNIKAIPEKAFMG), 282–303 (LLQTIHFYDNPIQFVGRSAFQY), 306–328 (KLHTLSLNGAMDIQEFPDLKGTT), 329–350 (SLEILTLTRAGIRLLPSGMCQQ), 353–374 (RLRVLELSHNQIEELPSLHRCQ), 375–396 (KLEEIGLQHNRIWEIGADTFSQ), 399–420 (SLQALDLSWNAIRSIHPEAFST), and 423–443 (SLVKLDLTDNQLTTLPLAGLG). N-linked (GlcNAc...) asparagine glycosylation is present at asparagine 208. The helical transmembrane segment at 568–588 (VWAIVLLSVLCNGLVLLTVFA) threads the bilayer. Residues 589-598 (GGPVPLPPVK) lie on the Cytoplasmic side of the membrane. A helical membrane pass occupies residues 599–619 (FVVGAIAGANTLTGISCGLLA). Over 620–644 (SVDALTFGQFSEYGARWETGLGCRA) the chain is Extracellular. Cysteines 642 and 717 form a disulfide. Residues 645 to 665 (TGFLAVLGSEASVLLLTLAAV) traverse the membrane as a helical segment. At 666–687 (QCSVSVSCVRAYGKSPSLGSVR) the chain is on the cytoplasmic side. A helical transmembrane segment spans residues 688–708 (AGVLGCLALAGLAAALPLASV). Residues 709–727 (GEYGASPLCLPYAPPEGQP) are Extracellular-facing. The chain crosses the membrane as a helical span at residues 728–748 (AALGFTVALVMMNSFCFLVVA). Residues 749–774 (GAYIKLYCDLPRGDFEAVWDCAMVRH) lie on the Cytoplasmic side of the membrane. Residues 775-795 (VAWLIFADGLLYCPVAFLSFA) form a helical membrane-spanning segment. The Extracellular segment spans residues 796–809 (SMLGLFPVTPEAVK). Residues 810-830 (SVLLVVLPLPACLNPLLYLLF) traverse the membrane as a helical segment. Residues 831-967 (NPHFRDDLRR…PSGLAFASHV (137 aa)) lie on the Cytoplasmic side of the membrane.

The protein belongs to the G-protein coupled receptor 1 family.

It localises to the cell membrane. Receptor for R-spondins that potentiates the canonical Wnt signaling pathway and acts as a marker of multipotent stem cells in the epidermis. Upon binding to R-spondins (RSPO1, RSPO2, RSPO3 or RSPO4), associates with phosphorylated LRP6 and frizzled receptors that are activated by extracellular Wnt receptors, triggering the canonical Wnt signaling pathway to increase expression of target genes. In contrast to classical G-protein coupled receptors, does not activate heterotrimeric G-proteins to transduce the signal. May act as a tumor suppressor. The sequence is that of Leucine-rich repeat-containing G-protein coupled receptor 6 (LGR6) from Homo sapiens (Human).